Here is a 343-residue protein sequence, read N- to C-terminus: MSDRQAALDMALKQIEKQFGKGSIMKLGEQAERRISTISSGSLALDVALGVGGYPRGRVIEIYGPESSGKTTVSLHAIAEVQRQGGQAAFIDAEHAMDPVYAQKLGVNIDELLLSQPDTGEQGLEIAEALVRSGAVDIIVIDSVAALVPKAEIEGDMGDSHVGLQARLMSQALRKLSGAINKSKTIAIFINQIREKVGVMFGNPETTPGGRALKFYSTVRLEVRRAEQLKQGNDIVGNKTKVKVVKNKVAPPFRVAEVDIMYGEGISREGEILDMASELDIVQKSGAWYSYNEERLGQGRENSKQFLKENTDLREEIAFFVREHHGIGENSGVEDTEDSTRQD.

64–71 (GPESSGKT) serves as a coordination point for ATP.

This sequence belongs to the RecA family.

It localises to the cytoplasm. Its function is as follows. Can catalyze the hydrolysis of ATP in the presence of single-stranded DNA, the ATP-dependent uptake of single-stranded DNA by duplex DNA, and the ATP-dependent hybridization of homologous single-stranded DNAs. It interacts with LexA causing its activation and leading to its autocatalytic cleavage. The protein is Protein RecA of Bacillus mycoides (strain KBAB4) (Bacillus weihenstephanensis).